A 369-amino-acid chain; its full sequence is Ubiquinone biosynthesis O-methyltransferase, mitochondrial (369 aa).

The N-terminal 85 residues, 1–85, are a transit peptide targeting the mitochondrion; sequence MWSGRKLGSS…SFRYPWARLY (85 aa). Arginine 124 provides a ligand contact to S-adenosyl-L-methionine. 2 positions are modified to N6-acetyllysine: lysine 143 and lysine 149. S-adenosyl-L-methionine is bound by residues glycine 154 and aspartate 175. Residue lysine 196 is modified to N6-acetyllysine. Serine 222 lines the S-adenosyl-L-methionine pocket. Residues glutamate 223, glutamate 226, and histidine 227 each contribute to the Mg(2+) site.

This sequence belongs to the class I-like SAM-binding methyltransferase superfamily. UbiG/COQ3 family. In terms of assembly, component of a multi-subunit COQ enzyme complex, composed of at least COQ3, COQ4, COQ5, COQ6, COQ7 and COQ9. Requires Mg(2+) as cofactor.

The protein localises to the mitochondrion inner membrane. It carries out the reaction 3,4-dihydroxy-5-(all-trans-decaprenyl)benzoate + S-adenosyl-L-methionine = 4-hydroxy-3-methoxy-5-(all-trans-decaprenyl)benzoate + S-adenosyl-L-homocysteine + H(+). The catalysed reaction is a 3-demethylubiquinone + S-adenosyl-L-methionine = a ubiquinone + S-adenosyl-L-homocysteine. It catalyses the reaction 3-demethylubiquinol-10 + S-adenosyl-L-methionine = ubiquinol-10 + S-adenosyl-L-homocysteine + H(+). It functions in the pathway cofactor biosynthesis; ubiquinone biosynthesis. Its function is as follows. O-methyltransferase required for two non-consecutive steps during ubiquinone biosynthesis. Catalyzes the 2 O-methylation of 3,4-dihydroxy-5-(all-trans-decaprenyl)benzoic acid into 4-hydroxy-3-methoxy-5-(all-trans-decaprenyl)benzoic acid. Also catalyzes the last step of ubiquinone biosynthesis by mediating methylation of 3-demethylubiquinone into ubiquinone. Also able to mediate the methylation of 3-demethylubiquinol-10 into ubiquinol-10. In Homo sapiens (Human), this protein is Ubiquinone biosynthesis O-methyltransferase, mitochondrial.